We begin with the raw amino-acid sequence, 271 residues long: MSAPRPVYDPSWDRANPNEVRRSIRERGYTGYTAGLAPGFVQANICILPKDWAEDFLLFCQRNPKPCPLLTRSDVGDPSLPALSDNIDIRTDVPRYQIFRNGEFTEEVTDIRSHWRDDLVTFAFGCSFSFEEALQDDGIPLRFLANNNVAGVYVSTMPTEAAGPFEAPLIVTMRSFTPQNAIRAIQITSRFPNVHGAPVHIGDPAQIGVDLAKRYQNVGDPTVGEGEIPVFWACGLTPQFAVMKAKPPFCITHAPSSMLVTDLRNSSLAVM.

The protein belongs to the D-glutamate cyclase family.

This chain is Putative hydro-lyase OCAR_7359/OCA5_c07590, found in Afipia carboxidovorans (strain ATCC 49405 / DSM 1227 / KCTC 32145 / OM5) (Oligotropha carboxidovorans).